A 210-amino-acid chain; its full sequence is C4-dicarboxylate TRAP transporter small permease protein DctQ (210 aa).

4 helical membrane-spanning segments follow: residues Glu13–Leu33, Ala77–Leu97, Val113–Ser133, and Ile160–Val180.

It belongs to the TRAP transporter small permease family. As to quaternary structure, the complex comprises the extracytoplasmic solute receptor protein DctP, and the two transmembrane proteins DctQ and DctM.

The protein localises to the cell inner membrane. Functionally, part of the tripartite ATP-independent periplasmic (TRAP) transport system DctPQM involved in C4-dicarboxylates uptake. The chain is C4-dicarboxylate TRAP transporter small permease protein DctQ from Pseudomonas aeruginosa (strain ATCC 15692 / DSM 22644 / CIP 104116 / JCM 14847 / LMG 12228 / 1C / PRS 101 / PAO1).